The primary structure comprises 532 residues: Metal-staphylopine-binding protein CntA (532 aa).

The signal sequence occupies residues 1–20 (MRKLTKMSAMLLASGLILTG). C21 is lipidated: N-palmitoyl cysteine. Residue C21 is the site of S-diacylglycerol cysteine attachment. Staphylopine contacts are provided by R165, R418, and N448.

It belongs to the bacterial solute-binding protein 5 family. In terms of assembly, the complex is composed of two ATP-binding proteins (CntD and CntF), two transmembrane proteins (CntB and CntC) and a solute-binding protein (CntA).

It is found in the cell membrane. Nickel/cobalt import is reduced in the presence of zinc. Functionally, part of the ABC transporter complex CntABCDF (Opp1) involved in the uptake of metal in complex with the metallophore staphylopine (StP). Involved in the import of divalent metals ions such as nickel, cobalt and zinc. Binds the metal via the metallophore StP, and transfers the StP-metal complex to the membrane-bound permease. Binds one molecule of StP/metal. Binds StP/Co(2+) and StP/Ni(2+) tighter than StP/Zn(2+). Plays a major role in nickel/cobalt import in zinc-depleted conditions. Contributes to virulence. Required for full urease activity in vitro. This is Metal-staphylopine-binding protein CntA from Staphylococcus aureus (strain NCTC 8325 / PS 47).